The chain runs to 336 residues: Phosphoribosylformylglycinamidine cyclo-ligase (336 aa).

It belongs to the AIR synthase family.

Its subcellular location is the cytoplasm. The catalysed reaction is 2-formamido-N(1)-(5-O-phospho-beta-D-ribosyl)acetamidine + ATP = 5-amino-1-(5-phospho-beta-D-ribosyl)imidazole + ADP + phosphate + H(+). It functions in the pathway purine metabolism; IMP biosynthesis via de novo pathway; 5-amino-1-(5-phospho-D-ribosyl)imidazole from N(2)-formyl-N(1)-(5-phospho-D-ribosyl)glycinamide: step 2/2. The protein is Phosphoribosylformylglycinamidine cyclo-ligase of Caldanaerobacter subterraneus subsp. tengcongensis (strain DSM 15242 / JCM 11007 / NBRC 100824 / MB4) (Thermoanaerobacter tengcongensis).